Here is a 454-residue protein sequence, read N- to C-terminus: UPF0210 protein Mhun_2657 (454 aa).

It belongs to the UPF0210 family.

This Methanospirillum hungatei JF-1 (strain ATCC 27890 / DSM 864 / NBRC 100397 / JF-1) protein is UPF0210 protein Mhun_2657.